The following is a 504-amino-acid chain: uncharacterized protein (504 aa).

Residues 6–26 (NLFIIFIFLFLLSQVSAYITF) traverse the membrane as a helical segment.

It to M.jannaschii MJ1506 and MJ1561.

It localises to the membrane. This is an uncharacterized protein from Methanocaldococcus jannaschii (strain ATCC 43067 / DSM 2661 / JAL-1 / JCM 10045 / NBRC 100440) (Methanococcus jannaschii).